Consider the following 523-residue polypeptide: 2-isopropylmalate synthase (523 aa).

The region spanning 5–267 is the Pyruvate carboxyltransferase domain; the sequence is VIIFDTTLRD…HTAINHQEIW (263 aa). Mn(2+) contacts are provided by D14, H202, H204, and N238. The regulatory domain stretch occupies residues 392-523; sequence RLDYFSVQSG…QHNENNKETV (132 aa).

It belongs to the alpha-IPM synthase/homocitrate synthase family. LeuA type 1 subfamily. Homodimer. Mn(2+) serves as cofactor.

It is found in the cytoplasm. The catalysed reaction is 3-methyl-2-oxobutanoate + acetyl-CoA + H2O = (2S)-2-isopropylmalate + CoA + H(+). Its pathway is amino-acid biosynthesis; L-leucine biosynthesis; L-leucine from 3-methyl-2-oxobutanoate: step 1/4. Catalyzes the condensation of the acetyl group of acetyl-CoA with 3-methyl-2-oxobutanoate (2-ketoisovalerate) to form 3-carboxy-3-hydroxy-4-methylpentanoate (2-isopropylmalate). The sequence is that of 2-isopropylmalate synthase from Escherichia coli O157:H7.